The chain runs to 293 residues: Outer membrane protein assembly factor BamD (293 aa).

Residues 1–26 (MIQRPTFFSPIHLLAVLLATFILITG) form the signal peptide. Cys-27 carries the N-palmitoyl cysteine lipid modification. Cys-27 is lipidated: S-diacylglycerol cysteine.

The protein belongs to the BamD family. In terms of assembly, part of the Bam complex.

The protein resides in the cell outer membrane. In terms of biological role, part of the outer membrane protein assembly complex, which is involved in assembly and insertion of beta-barrel proteins into the outer membrane. In Xylella fastidiosa (strain Temecula1 / ATCC 700964), this protein is Outer membrane protein assembly factor BamD.